A 246-amino-acid polypeptide reads, in one-letter code: Ribonuclease PH (246 aa).

Phosphate-binding positions include Arg-91 and 129–131; that span reads GTR.

It belongs to the RNase PH family. In terms of assembly, homohexameric ring arranged as a trimer of dimers.

It carries out the reaction tRNA(n+1) + phosphate = tRNA(n) + a ribonucleoside 5'-diphosphate. Functionally, phosphorolytic 3'-5' exoribonuclease that plays an important role in tRNA 3'-end maturation. Removes nucleotide residues following the 3'-CCA terminus of tRNAs; can also add nucleotides to the ends of RNA molecules by using nucleoside diphosphates as substrates, but this may not be physiologically important. Probably plays a role in initiation of 16S rRNA degradation (leading to ribosome degradation) during starvation. This Burkholderia vietnamiensis (strain G4 / LMG 22486) (Burkholderia cepacia (strain R1808)) protein is Ribonuclease PH.